Reading from the N-terminus, the 316-residue chain is Membrane protein UL148 (316 aa).

The first 20 residues, 1–20, serve as a signal peptide directing secretion; the sequence is MLRLLFTLVLLALYGPSVDA. A helical membrane pass occupies residues 286–308; the sequence is FIVQYLNTLLITMMAAIWARVLI.

In terms of assembly, interacts with host SEL1L.

It is found in the host endoplasmic reticulum membrane. In terms of biological role, chaperone protein that plays an important role in HCMV tropism. Cooperates with UL116 to regulate the abundance of gH-gL complexes in virion. Favors the incorporation of gL into virions once UL116 has regulated the early folding steps of virion assembly. Interacts with the host ERAD machinery and slows gO decay which would otherwise be constitutively degraded. Reorganizes the host endoplasmic reticulum and activates the unfolded protein response. Additionally, plays a role in the evasion of antiviral immune response by down-regulating cell surface expression of host CD58. Mechanistically, interacts with host CD58 and retains its immature form intracellularly. The capacity to cause endoplasmic reticulum reorganization and the intracellular retention of host CD58 are functionally independent properties. This Human cytomegalovirus (strain Merlin) (HHV-5) protein is Membrane protein UL148 (UL148).